Consider the following 207-residue polypeptide: Ribosomal RNA small subunit methyltransferase G (207 aa).

Residues glycine 74, leucine 79, 125-126 (VE), and arginine 140 contribute to the S-adenosyl-L-methionine site.

Belongs to the methyltransferase superfamily. RNA methyltransferase RsmG family.

It is found in the cytoplasm. It carries out the reaction guanosine(527) in 16S rRNA + S-adenosyl-L-methionine = N(7)-methylguanosine(527) in 16S rRNA + S-adenosyl-L-homocysteine. Specifically methylates the N7 position of guanine in position 527 of 16S rRNA. This chain is Ribosomal RNA small subunit methyltransferase G, found in Shewanella piezotolerans (strain WP3 / JCM 13877).